The primary structure comprises 38 residues: Large ribosomal subunit protein bL36 (38 aa).

The protein belongs to the bacterial ribosomal protein bL36 family.

The polypeptide is Large ribosomal subunit protein bL36 (Pseudomonas entomophila (strain L48)).